Consider the following 335-residue polypeptide: Ankyrin repeat and SOCS box protein 1 (335 aa).

ANK repeat units lie at residues 36 to 68 (CEDT…RINE), 77 to 106 (LPCT…EVDL), 110 to 139 (KGQT…DPNG), 143 to 172 (HRST…DVDV), 191 to 220 (LVVC…NPDF), and 235 to 265 (SPGC…NLNL). The SOCS box domain maps to 286–335 (LQVFKEARSVPRTLLCLCRVAVRRALGKHRLHLIPSLPLPDPIKKFLLHE).

The protein belongs to the ankyrin SOCS box (ASB) family. In terms of assembly, interacts with CUL5 and RNF7. Interacts with TAB2 and TAB3.

Its subcellular location is the cytoplasm. Its pathway is protein modification; protein ubiquitination. In terms of biological role, probable substrate-recognition component of a SCF-like ECS (Elongin-Cullin-SOCS-box protein) E3 ligase complex which mediates the ubiquitination and subsequent proteasomal degradation of target proteins. Mediates Notch-induced ubiquitination and degradation of TCF3/E2A and JAK2. Functions as a tumor suppressor by enhancing CHCHD3 'Lys-48'-linked ubiquitination, leading to inhibition of the CHCHD3/ROS signaling pathway. Suppresses TAB2-linked 'Lys-48' polyubiquitination and consequently facilitates the initiation of NF-kappa-B and MAPK signaling cascades. May play a role in testis development. This Homo sapiens (Human) protein is Ankyrin repeat and SOCS box protein 1 (ASB1).